The sequence spans 173 residues: Large ribosomal RNA subunit accumulation protein YceD (173 aa).

It belongs to the DUF177 domain family.

Its function is as follows. Plays a role in synthesis, processing and/or stability of 23S rRNA. This chain is Large ribosomal RNA subunit accumulation protein YceD (yceD), found in Salmonella typhi.